The chain runs to 404 residues: Cysteine desulfurase IscS (404 aa).

Pyridoxal 5'-phosphate is bound by residues 75–76 (AT), Asn-155, Gln-183, and 203–205 (SAH). Lys-206 is subject to N6-(pyridoxal phosphate)lysine. Residue Thr-243 participates in pyridoxal 5'-phosphate binding. The Cysteine persulfide intermediate role is filled by Cys-328. Cys-328 serves as a coordination point for [2Fe-2S] cluster.

Belongs to the class-V pyridoxal-phosphate-dependent aminotransferase family. NifS/IscS subfamily. In terms of assembly, homodimer. Forms a heterotetramer with IscU, interacts with other sulfur acceptors. It depends on pyridoxal 5'-phosphate as a cofactor.

Its subcellular location is the cytoplasm. It carries out the reaction (sulfur carrier)-H + L-cysteine = (sulfur carrier)-SH + L-alanine. It functions in the pathway cofactor biosynthesis; iron-sulfur cluster biosynthesis. Master enzyme that delivers sulfur to a number of partners involved in Fe-S cluster assembly, tRNA modification or cofactor biosynthesis. Catalyzes the removal of elemental sulfur atoms from cysteine to produce alanine. Functions as a sulfur delivery protein for Fe-S cluster synthesis onto IscU, an Fe-S scaffold assembly protein, as well as other S acceptor proteins. This chain is Cysteine desulfurase IscS, found in Shewanella sediminis (strain HAW-EB3).